Here is a 409-residue protein sequence, read N- to C-terminus: Immediate early response gene 5-like protein (409 aa).

Disordered stretches follow at residues 168 to 237 and 312 to 335; these read QPPH…PSSS and GQEEEDDEEEDAGDLGAEPPGGTP. Residues 184 to 195 are compositionally biased toward pro residues; it reads QPGPAPLPPPAP. Composition is skewed to low complexity over residues 196 to 212 and 220 to 237; these read AALCPRDPRVPAACSAP and PPTVAASSPPASPAPSSS. Positions 313-324 are enriched in acidic residues; it reads QEEEDDEEEDAG.

It belongs to the IER family.

The chain is Immediate early response gene 5-like protein (Ier5l) from Rattus norvegicus (Rat).